We begin with the raw amino-acid sequence, 202 residues long: Small ribosomal subunit protein uS4c (202 aa).

Basic residues predominate over residues 1–13; it reads MSRYRGPRMKMIR. The segment at 1 to 41 is disordered; sequence MSRYRGPRMKMIRRPGTLPGLTSKTPGTKVGSSDRSTSSKK. Residues 29 to 41 are compositionally biased toward low complexity; it reads KVGSSDRSTSSKK. Positions 90-153 constitute an S4 RNA-binding domain; the sequence is MRLDNTIFRL…KCRLVDRRDM (64 aa).

Belongs to the universal ribosomal protein uS4 family. As to quaternary structure, part of the 30S ribosomal subunit. Contacts protein S5. The interaction surface between S4 and S5 is involved in control of translational fidelity.

It is found in the plastid. Functionally, one of the primary rRNA binding proteins, it binds directly to 16S rRNA where it nucleates assembly of the body of the 30S subunit. Its function is as follows. With S5 and S12 plays an important role in translational accuracy. This chain is Small ribosomal subunit protein uS4c (rps4), found in Aneura mirabilis (Parasitic liverwort).